The sequence spans 215 residues: Oligoribonuclease (215 aa).

In terms of domain architecture, Exonuclease spans 5–170 (LVWIDCEMTG…ADIHESIREL (166 aa)). The active site involves Tyr127. Residues 196-215 (LSDGAGAQEETDSAEAPQSG) form a disordered region.

This sequence belongs to the oligoribonuclease family.

It localises to the cytoplasm. 3'-to-5' exoribonuclease specific for small oligoribonucleotides. The sequence is that of Oligoribonuclease from Mycobacterium bovis (strain BCG / Pasteur 1173P2).